The chain runs to 59 residues: Protein translocase subunit SecE (59 aa).

Residues 37-57 (LIVLLFVGLLAFLVQLAFSIL) traverse the membrane as a helical segment.

The protein belongs to the SecE/SEC61-gamma family. As to quaternary structure, component of the Sec protein translocase complex. Heterotrimer consisting of SecY (alpha), SecG (beta) and SecE (gamma) subunits. The heterotrimers can form oligomers, although 1 heterotrimer is thought to be able to translocate proteins. Interacts with the ribosome. May interact with SecDF, and other proteins may be involved.

The protein resides in the cell membrane. Functionally, essential subunit of the Sec protein translocation channel SecYEG. Clamps together the 2 halves of SecY. May contact the channel plug during translocation. This is Protein translocase subunit SecE from Metallosphaera sedula (strain ATCC 51363 / DSM 5348 / JCM 9185 / NBRC 15509 / TH2).